The sequence spans 339 residues: 2-halobenzoate 1,2-dioxygenase electron transfer component (339 aa).

One can recognise a 2Fe-2S ferredoxin-type domain in the interval 3-96; that stretch reads HSIALRFEDD…DCVVRILASS (94 aa). Positions 40, 45, 48, and 80 each coordinate [2Fe-2S] cluster. The ferredoxin-reductase stretch occupies residues 98 to 336; sequence ACQVKKSTMT…NFYFEKFAPT (239 aa). The FAD-binding FR-type domain occupies 103-203; sequence KSTMTGQMTE…DGPYGAFYLR (101 aa).

Belongs to the bacterial ring-hydroxylating dioxygenase ferredoxin reductase family. In terms of assembly, monomer. It is part of 2-halobenzoate dioxygenase two component enzyme system. The other component is a dioxygenase component consisting of 3 large (CbdA) subunits and 3 small (CbdB) subunits. It depends on FAD as a cofactor. The cofactor is [2Fe-2S] cluster.

It carries out the reaction 2 reduced [2Fe-2S]-[ferredoxin] + NAD(+) + H(+) = 2 oxidized [2Fe-2S]-[ferredoxin] + NADH. The protein operates within xenobiotic degradation; benzoate degradation via CoA ligation. Electron transfer component of 2-halobenzoate 1,2-dioxygenase system. In Burkholderia cepacia (Pseudomonas cepacia), this protein is 2-halobenzoate 1,2-dioxygenase electron transfer component (cbdC).